Consider the following 292-residue polypeptide: UPF0696 protein C11orf68 (292 aa).

Low complexity predominate over residues 1–11; the sequence is MAAAAAAAVAG. The disordered stretch occupies residues 1-60; that stretch reads MAAAAAAAVAGVGRGGGGAEPRQERSRARGWAGVERSEGRRMEPGEELEEEGSPGGREDG. Position 29 is an omega-N-methylarginine (R29). Basic and acidic residues predominate over residues 35–44; sequence ERSEGRRMEP.

It belongs to the UPF0696 family.

This chain is UPF0696 protein C11orf68 (C11orf68), found in Homo sapiens (Human).